Consider the following 201-residue polypeptide: Recombination protein RecR (201 aa).

The C4-type zinc-finger motif lies at 59–74 (CEICGNMDTENICRIC). The 96-residue stretch at 82 to 177 (SIIAIVETVA…KISRLASGIP (96 aa)) folds into the Toprim domain.

Belongs to the RecR family.

Functionally, may play a role in DNA repair. It seems to be involved in an RecBC-independent recombinational process of DNA repair. It may act with RecF and RecO. The polypeptide is Recombination protein RecR (Rickettsia peacockii (strain Rustic)).